Reading from the N-terminus, the 179-residue chain is Large ribosomal subunit protein uL5 (179 aa).

The protein belongs to the universal ribosomal protein uL5 family. In terms of assembly, part of the 50S ribosomal subunit; part of the 5S rRNA/L5/L18/L25 subcomplex. Contacts the 5S rRNA and the P site tRNA. Forms a bridge to the 30S subunit in the 70S ribosome.

In terms of biological role, this is one of the proteins that bind and probably mediate the attachment of the 5S RNA into the large ribosomal subunit, where it forms part of the central protuberance. In the 70S ribosome it contacts protein S13 of the 30S subunit (bridge B1b), connecting the 2 subunits; this bridge is implicated in subunit movement. Contacts the P site tRNA; the 5S rRNA and some of its associated proteins might help stabilize positioning of ribosome-bound tRNAs. This chain is Large ribosomal subunit protein uL5, found in Xylella fastidiosa (strain M23).